The primary structure comprises 68 residues: UPF0435 protein Sca_1453 (68 aa).

Belongs to the UPF0435 family.

The polypeptide is UPF0435 protein Sca_1453 (Staphylococcus carnosus (strain TM300)).